Reading from the N-terminus, the 176-residue chain is Small ribosomal subunit protein uS5 (176 aa).

The S5 DRBM domain occupies 15 to 78; it reads FEERIVEIRR…SAARRNVFEV (64 aa).

This sequence belongs to the universal ribosomal protein uS5 family. As to quaternary structure, part of the 30S ribosomal subunit. Contacts proteins S4 and S8.

Its function is as follows. With S4 and S12 plays an important role in translational accuracy. Functionally, located at the back of the 30S subunit body where it stabilizes the conformation of the head with respect to the body. In Thermosipho africanus (strain TCF52B), this protein is Small ribosomal subunit protein uS5.